The primary structure comprises 407 residues: Arginine deiminase (407 aa).

The active-site Amidino-cysteine intermediate is cysteine 397.

It belongs to the arginine deiminase family.

The protein resides in the cytoplasm. It carries out the reaction L-arginine + H2O = L-citrulline + NH4(+). It participates in amino-acid degradation; L-arginine degradation via ADI pathway; carbamoyl phosphate from L-arginine: step 1/2. In Salmonella arizonae (strain ATCC BAA-731 / CDC346-86 / RSK2980), this protein is Arginine deiminase.